Consider the following 453-residue polypeptide: MLIHPEEILETIHMIKAENFDIRTVTMGINLRGCCHSDIDVFNKNIYNKITGYAKELVRTTEEVQNLYGIPITNKRIAVTPIAIVAESCNTEDYVSIAKTLDRAAEDVGIDFIGGFSALVHKGITPGDMKLINSIPQALASTKKVCASINVATTKAGINMDAVAMMGHIVKKTAEATKDADGIGCAKLVIFANAPEDNPFMAGAFHGIGEPDCVINVGVSGPGVVNSAVRELKDPDLGEISEAIKKTAFKITRMGEMVGREVSRRLNVDFGVLDLSLAPTPEIGDSVAAILEAMGLETCGTHGTTAALALLNDAVKKGGSMASSYVGGLSGAFIPVSEDAGMIRAVELGALSLEKLEAMTSVCSVGLDMIAIPGDTSAATISAIIADEMAIGMINKKTTAVRLIPAPGKKVGDSVEFGGLLGRAPVMKVSEFSSEKFIARGGRIPAPIQALTN.

It belongs to the UPF0210 family.

The sequence is that of UPF0210 protein Mbur_0828 from Methanococcoides burtonii (strain DSM 6242 / NBRC 107633 / OCM 468 / ACE-M).